A 156-amino-acid polypeptide reads, in one-letter code: MRNSTKQEDLVKAFKALLKEEKFSSQSEIVHALQDEGFENINQSKVSRMLTKFGAVRTRNAKMEMVYCLPAELGVPTTSSPLKNLVLDVDYNDAVVVIHTSPGAAQLIARLLDSLGKSEGILGTIAGDDTIFTTPARGFSVKQLYEAILVLFEQEL.

It belongs to the ArgR family.

The protein localises to the cytoplasm. The protein operates within amino-acid biosynthesis; L-arginine biosynthesis [regulation]. In terms of biological role, regulates arginine biosynthesis genes. This is Arginine repressor from Pectobacterium atrosepticum (strain SCRI 1043 / ATCC BAA-672) (Erwinia carotovora subsp. atroseptica).